A 362-amino-acid chain; its full sequence is Chorismate synthase (362 aa).

NADP(+) is bound by residues arginine 48 and arginine 54. Residues 125 to 127 (RSS), 238 to 239 (NA), glycine 286, 301 to 305 (KPTSS), and arginine 327 contribute to the FMN site.

Belongs to the chorismate synthase family. Homotetramer. FMNH2 serves as cofactor.

The catalysed reaction is 5-O-(1-carboxyvinyl)-3-phosphoshikimate = chorismate + phosphate. It participates in metabolic intermediate biosynthesis; chorismate biosynthesis; chorismate from D-erythrose 4-phosphate and phosphoenolpyruvate: step 7/7. Catalyzes the anti-1,4-elimination of the C-3 phosphate and the C-6 proR hydrogen from 5-enolpyruvylshikimate-3-phosphate (EPSP) to yield chorismate, which is the branch point compound that serves as the starting substrate for the three terminal pathways of aromatic amino acid biosynthesis. This reaction introduces a second double bond into the aromatic ring system. In Granulibacter bethesdensis (strain ATCC BAA-1260 / CGDNIH1), this protein is Chorismate synthase.